The following is a 226-amino-acid chain: MNKLKLKNEKEVRIKFGEYKLTGFSSDNGNNLYKLFNLTLSKIRYRKAMLEHNFQLPKIKESHKPKEITEKIKENDIYFLELINEIKKDFKDFCSLDAGTLFELFMYYTLIEFFKENNIDAKVIRNLDVSYKGNIFTEIDLFVDVFGKNFIFECKNRHISSNAILKLYGIMKILNINFGVLASTKGFYGNLKKEDIFKEYNIYILDKLIEKEKNKIFKELKDIFNI.

This is an uncharacterized protein from Methanocaldococcus jannaschii (strain ATCC 43067 / DSM 2661 / JAL-1 / JCM 10045 / NBRC 100440) (Methanococcus jannaschii).